The sequence spans 367 residues: 4-hydroxy-3-methylbut-2-en-1-yl diphosphate synthase (flavodoxin) (367 aa).

Residues C268, C271, C303, and E310 each coordinate [4Fe-4S] cluster.

It belongs to the IspG family. [4Fe-4S] cluster is required as a cofactor.

It carries out the reaction (2E)-4-hydroxy-3-methylbut-2-enyl diphosphate + oxidized [flavodoxin] + H2O + 2 H(+) = 2-C-methyl-D-erythritol 2,4-cyclic diphosphate + reduced [flavodoxin]. It participates in isoprenoid biosynthesis; isopentenyl diphosphate biosynthesis via DXP pathway; isopentenyl diphosphate from 1-deoxy-D-xylulose 5-phosphate: step 5/6. Its function is as follows. Converts 2C-methyl-D-erythritol 2,4-cyclodiphosphate (ME-2,4cPP) into 1-hydroxy-2-methyl-2-(E)-butenyl 4-diphosphate. This chain is 4-hydroxy-3-methylbut-2-en-1-yl diphosphate synthase (flavodoxin), found in Shouchella clausii (strain KSM-K16) (Alkalihalobacillus clausii).